Here is a 254-residue protein sequence, read N- to C-terminus: L-arabinose 1-dehydrogenase (NAD(P)(+)) (254 aa).

Tyr142 serves as the catalytic Proton acceptor. 2 residues coordinate NAD(+): Tyr142 and Lys146.

This sequence belongs to the NAD(P)-dependent epimerase/dehydratase family. As to quaternary structure, homotetramer.

It catalyses the reaction alpha-L-arabinopyanose + NAD(+) = L-arabinono-1,4-lactone + NADH + H(+). The enzyme catalyses alpha-L-arabinopyanose + NADP(+) = L-arabinono-1,4-lactone + NADPH + H(+). It functions in the pathway carbohydrate degradation; L-arabinose degradation via L-arabinono-1,4-lactone pathway. Its function is as follows. L-AraDH initiates the degradation of L-arabinose. Catalyzes the NAD(P)(+)-dependent conversion of L-arabinose to L-arabino-gamma-lactone. It is highly specific for L-arabinose as substrate and can use both NADP(+) and NAD(+) as electron acceptor, with a slight preference for NADP(+). This is L-arabinose 1-dehydrogenase (NAD(P)(+)) from Haloferax volcanii (strain ATCC 29605 / DSM 3757 / JCM 8879 / NBRC 14742 / NCIMB 2012 / VKM B-1768 / DS2) (Halobacterium volcanii).